The following is an 873-amino-acid chain: Tyrosine-protein kinase transforming protein Fps (873 aa).

A disordered region spans residues 1 to 46; the sequence is ASGQLHRPQPQEHTSTSAAAGTWRLTQASESRHRLPHCSAAPSHQD. Positions 11 to 29 are enriched in polar residues; sequence QEHTSTSAAAGTWRLTQAS. The F-BAR domain maps to 50-313; it reads MGFGPELWCP…AVEMIDPATE (264 aa). The interval 445-471 is disordered; the sequence is GSEEPPPALPLQEDRQSARSTDQERSG. Basic and acidic residues predominate over residues 456–469; sequence QEDRQSARSTDQER. The SH2 domain maps to 511-600; sequence WYHGAIPRSE…KSGIVLTRAV (90 aa). A Protein kinase domain is found at 612 to 865; that stretch reads VLLGERIGRG…PSFGAVHQDL (254 aa). Residues 618 to 626 and Lys641 each bind ATP; that span reads IGRGNFGEV. The Proton acceptor role is filled by Asp734. Position 764 is a phosphotyrosine; by autocatalysis (Tyr764).

It belongs to the protein kinase superfamily. Tyr protein kinase family. Fes/fps subfamily.

It catalyses the reaction L-tyrosyl-[protein] + ATP = O-phospho-L-tyrosyl-[protein] + ADP + H(+). This is Tyrosine-protein kinase transforming protein Fps (V-FPS) from Gallus gallus (Chicken).